We begin with the raw amino-acid sequence, 280 residues long: Late embryogenesis abundant protein 76 (280 aa).

2 disordered regions span residues 1-156 and 220-241; these read MASN…GEAV and EEED…TDPT. Residues 28 to 39 show a composition bias toward basic and acidic residues; that stretch reads MRDKAEEGKDKT. LEA 11-mer repeat repeat units follow at residues 31-41, 53-63, 75-85, 97-107, and 119-129; these read KAEEGKDKTSQ, TAQAAKDKTSQ, and TTQSSKEKTSQ. Low complexity predominate over residues 40–114; the sequence is SQTAQKAQQK…TSQAAQTTQQ (75 aa). 2 stretches are compositionally biased toward basic and acidic residues: residues 115 to 127 and 136 to 145; these read KAHE…KEKT and EKARETKDKT. Positions 230–239 are enriched in low complexity; sequence TTTCTTQSTD.

The protein belongs to the LEA type 4 family.

Lea proteins are late embryonic proteins abundant in higher plant seed embryos. The chain is Late embryogenesis abundant protein 76 from Brassica napus (Rape).